Reading from the N-terminus, the 266-residue chain is Phosphatidylglycerol--prolipoprotein diacylglyceryl transferase (266 aa).

A run of 7 helical transmembrane segments spans residues 19-39 (IWGPLDIRWYGLAYIAAFAFA), 61-81 (LMFWGFIGVILGGRIGYTLFY), 91-111 (LYLFYIHEGGMSFHGGLLGVI), 125-145 (FLQVGDFVAPLVPMGLFFGRI), 176-196 (PSQLYEALLEGLLLFAVILWF), 204-224 (GAVSGLFLLGYGVARFIVEFF), and 237-257 (GMSMGQWLTLPMIILGIILMV). Residue R144 participates in a 1,2-diacyl-sn-glycero-3-phospho-(1'-sn-glycerol) binding.

The protein belongs to the Lgt family.

It localises to the cell inner membrane. The enzyme catalyses L-cysteinyl-[prolipoprotein] + a 1,2-diacyl-sn-glycero-3-phospho-(1'-sn-glycerol) = an S-1,2-diacyl-sn-glyceryl-L-cysteinyl-[prolipoprotein] + sn-glycerol 1-phosphate + H(+). Its pathway is protein modification; lipoprotein biosynthesis (diacylglyceryl transfer). Catalyzes the transfer of the diacylglyceryl group from phosphatidylglycerol to the sulfhydryl group of the N-terminal cysteine of a prolipoprotein, the first step in the formation of mature lipoproteins. This chain is Phosphatidylglycerol--prolipoprotein diacylglyceryl transferase, found in Idiomarina loihiensis (strain ATCC BAA-735 / DSM 15497 / L2-TR).